We begin with the raw amino-acid sequence, 504 residues long: Tachykinin-like peptides receptor 86C (504 aa).

Over 1-84 the chain is Extracellular; it reads MSEIVDTELL…PYELPWEQKT (84 aa). N-linked (GlcNAc...) asparagine glycosylation is found at asparagine 12, asparagine 28, and asparagine 36. A helical transmembrane segment spans residues 85 to 108; the sequence is IWAIIFGLMMFVAIAGNGIVLWIV. At 109–118 the chain is on the cytoplasmic side; the sequence is TGHRSMRTVT. Residues 119–143 traverse the membrane as a helical segment; sequence NYFLLNLSIADLLMSSLNCVFNFIF. Topologically, residues 144 to 155 are extracellular; it reads MLNSDWPFGSIY. Residues 156 to 179 form a helical membrane-spanning segment; that stretch reads CTINNFVANVTVSTSVFTLVAISF. Residues 180–199 are Cytoplasmic-facing; sequence DRYIAIVHPLKRRTSRRKVR. A helical membrane pass occupies residues 200–224; that stretch reads IILVLIWALSCVLSAPCLLYSSIMT. Residues 225–250 are Extracellular-facing; sequence KHYYNGKSRTVCFMMWPDGRYPTSMA. A helical membrane pass occupies residues 251–275; the sequence is DYAYNLIILVLTYGIPMIVMLICYS. The Cytoplasmic portion of the chain corresponds to 276-308; sequence LMGRVLWGSRSIGENTDRQMESMKSKRKVVRMF. Residues 309–330 form a helical membrane-spanning segment; sequence IAIVSIFAICWLPYHLFFIYAY. At 331-343 the chain is on the extracellular side; the sequence is HNNQVASTKYVQH. A helical transmembrane segment spans residues 344–367; sequence MYLGFYWLAMSNAMVNPLIYYWMN. The Cytoplasmic segment spans residues 368–504; that stretch reads KRFRMYFQRI…NPVELSPKQM (137 aa). The segment at 393-450 is disordered; sequence PKSRLTNKNSSNRHTRAETKSQWKRSTMETQIQQAPVTSSCREQRSAQQQQPPGSGTN. Composition is skewed to polar residues over residues 395–404 and 416–450; these read SRLTNKNSSN and KRST…SGTN.

Belongs to the G-protein coupled receptor 1 family. As to expression, expressed in central nervous system, as well as in subsets of neurons in each segment of the developing ventral ganglia.

It is found in the cell membrane. In terms of biological role, receptor for tachykinin-like peptides. The sequence is that of Tachykinin-like peptides receptor 86C (TkR86C) from Drosophila melanogaster (Fruit fly).